Reading from the N-terminus, the 140-residue chain is Large-conductance mechanosensitive channel (140 aa).

Transmembrane regions (helical) follow at residues 9 to 29 and 86 to 106; these read AFALKGNVVDLAVGVIIGAAF and GSFLTIVLNFLILAFIIFLMV.

This sequence belongs to the MscL family. As to quaternary structure, homopentamer.

Its subcellular location is the cell inner membrane. Channel that opens in response to stretch forces in the membrane lipid bilayer. May participate in the regulation of osmotic pressure changes within the cell. The sequence is that of Large-conductance mechanosensitive channel from Anaeromyxobacter dehalogenans (strain 2CP-1 / ATCC BAA-258).